A 953-amino-acid chain; its full sequence is Ubiquitin carboxyl-terminal hydrolase CYLD (953 aa).

An interaction with TRIP region spans residues cysteine 106–glycine 590. 2 consecutive CAP-Gly domains span residues leucine 153–alanine 198 and aspartate 253–cysteine 286. A disordered region spans residues phenylalanine 318–glutamate 350. The span at glycine 327–arginine 346 shows a compositional bias: polar residues. Serine 384 is modified (phosphoserine). The interval glutamate 387–glutamate 410 is disordered. Residues aspartate 391–glycine 466 form an interaction with TRAF2 region. 2 positions are modified to phosphoserine: serine 415 and serine 419. The segment at leucine 467–glutamate 681 is interaction with IKBKG/NEMO. The 44-residue stretch at glycine 489–lysine 532 folds into the CAP-Gly 3 domain. A USP domain is found at lysine 589–proline 947. Cysteine 598 (nucleophile) is an active-site residue. Residues leucine 778–histidine 830 form a B-box region. Zn(2+) contacts are provided by cysteine 785, cysteine 788, cysteine 796, cysteine 799, cysteine 814, cysteine 817, histidine 822, and histidine 830. The active-site Proton acceptor is the histidine 868.

This sequence belongs to the peptidase C19 family. In terms of assembly, interacts (via CAP-Gly domain) with IKBKG/NEMO (via proline-rich C-terminal region). Interacts with TRAF2 and TRIP. Interacts with PLK1, DVL1, DVL3, MAVS, TBK1, IKKE and RIGI. Interacts (via CAP-Gly domain) with microtubules. Interacts with HDAC6 and BCL3. Interacts with MAP3K7. Identified in a complex with TRAF6 and SQSTM1. Interacts with OPTN and SQSTM1. Interacts with CEP350. Interacts with RNF31; the interaction is indirect and is mediated via SPATA2. Interacts with SPATA2 (via the PUB domain); the interaction is direct and recruits CYLD to the LUBAC complex, thereby regulating TNF-alpha-induced necroptosis. Phosphorylated on several serine residues by IKKA and/or IKKB in response to immune stimuli. Phosphorylation requires IKBKG. Phosphorylation abolishes TRAF2 deubiquitination, interferes with the activation of Jun kinases, and strongly reduces CD40-dependent gene activation by NF-kappa-B. Post-translationally, ubiquitinated. Polyubiquitinated in hepatocytes treated with palmitic acid. Ubiquitination is mediated by E3 ligase TRIM47 and leads to proteasomal degradation.

It is found in the cytoplasm. It localises to the perinuclear region. Its subcellular location is the cytoskeleton. The protein localises to the cell membrane. The protein resides in the microtubule organizing center. It is found in the centrosome. It localises to the spindle. Its subcellular location is the cilium basal body. The catalysed reaction is Thiol-dependent hydrolysis of ester, thioester, amide, peptide and isopeptide bonds formed by the C-terminal Gly of ubiquitin (a 76-residue protein attached to proteins as an intracellular targeting signal).. Deubiquitinase that specifically cleaves 'Lys-63'- and linear 'Met-1'-linked polyubiquitin chains and is involved in NF-kappa-B activation and TNF-alpha-induced necroptosis. Negatively regulates NF-kappa-B activation by deubiquitinating upstream signaling factors. Contributes to the regulation of cell survival, proliferation and differentiation via its effects on NF-kappa-B activation. Negative regulator of Wnt signaling. Inhibits HDAC6 and thereby promotes acetylation of alpha-tubulin and stabilization of microtubules. Plays a role in the regulation of microtubule dynamics, and thereby contributes to the regulation of cell proliferation, cell polarization, cell migration, and angiogenesis. Required for normal cell cycle progress and normal cytokinesis. Inhibits nuclear translocation of NF-kappa-B. Plays a role in the regulation of inflammation and the innate immune response, via its effects on NF-kappa-B activation. Dispensable for the maturation of intrathymic natural killer cells, but required for the continued survival of immature natural killer cells. Negatively regulates TNFRSF11A signaling and osteoclastogenesis. Involved in the regulation of ciliogenesis, allowing ciliary basal bodies to migrate and dock to the plasma membrane; this process does not depend on NF-kappa-B activation. Ability to remove linear ('Met-1'-linked) polyubiquitin chains regulates innate immunity and TNF-alpha-induced necroptosis: recruited to the LUBAC complex via interaction with SPATA2 and restricts linear polyubiquitin formation on target proteins. Regulates innate immunity by restricting linear polyubiquitin formation on RIPK2 in response to NOD2 stimulation. Involved in TNF-alpha-induced necroptosis by removing linear ('Met-1'-linked) polyubiquitin chains from RIPK1, thereby regulating the kinase activity of RIPK1. Negatively regulates intestinal inflammation by removing 'Lys-63' linked polyubiquitin chain of NLRP6, thereby reducing the interaction between NLRP6 and PYCARD/ASC and formation of the NLRP6 inflammasome. Does not catalyze deubiquitination of heterotypic 'Lys-63'-/'Lys-48'-linked branched ubiquitin chains. Removes 'Lys-63' linked polyubiquitin chain of MAP3K7, which inhibits phosphorylation and blocks downstream activation of the JNK-p38 kinase cascades. Also removes 'Lys-63'-linked polyubiquitin chains of MAP3K1 and MA3P3K3, which inhibit their interaction with MAP2K1 and MAP2K2. This chain is Ubiquitin carboxyl-terminal hydrolase CYLD (Cyld), found in Rattus norvegicus (Rat).